Consider the following 467-residue polypeptide: tRNA modification GTPase MnmE (467 aa).

3 residues coordinate (6S)-5-formyl-5,6,7,8-tetrahydrofolate: arginine 30, glutamate 92, and arginine 131. One can recognise a TrmE-type G domain in the interval 226-388 (GLKVAIIGRP…LEAAILNAVN (163 aa)). Asparagine 236 is a binding site for K(+). Residues 236–241 (NVGKSS), 255–261 (TDLPGTT), and 280–283 (DTAG) each bind GTP. Serine 240 serves as a coordination point for Mg(2+). The K(+) site is built by threonine 255, leucine 257, and threonine 260. Position 261 (threonine 261) interacts with Mg(2+). Residue lysine 467 coordinates (6S)-5-formyl-5,6,7,8-tetrahydrofolate.

The protein belongs to the TRAFAC class TrmE-Era-EngA-EngB-Septin-like GTPase superfamily. TrmE GTPase family. Homodimer. Heterotetramer of two MnmE and two MnmG subunits. Requires K(+) as cofactor.

The protein resides in the cytoplasm. Exhibits a very high intrinsic GTPase hydrolysis rate. Involved in the addition of a carboxymethylaminomethyl (cmnm) group at the wobble position (U34) of certain tRNAs, forming tRNA-cmnm(5)s(2)U34. The chain is tRNA modification GTPase MnmE from Trichodesmium erythraeum (strain IMS101).